The following is a 176-amino-acid chain: Woronin body major protein (176 aa).

Residues 1–16 (MGYYDDDAHGHVEADA) constitute a propeptide that is removed on maturation. Over residues 1 to 16 (MGYYDDDAHGHVEADA) the composition is skewed to basic and acidic residues. Residues 1 to 31 (MGYYDDDAHGHVEADAAPRATTGTGTGSASQ) form a disordered region. The Microbody targeting signal signature appears at 174–176 (SRL).

This sequence belongs to the eIF-5A family. Hex1 subfamily. In terms of assembly, forms oligomers. Self-assembles into hexagonal rods.

It localises to the cell septum. Its function is as follows. Major component of Woronin bodies, fungal-specific organelles that occlude septal pores in order to separate intact from damaged compartments. Hex-1 binds directly or indirectly to the Woronin body tether that in turn is anchored at the rim of the septal pore. This chain is Woronin body major protein, found in Neurospora crassa (strain ATCC 24698 / 74-OR23-1A / CBS 708.71 / DSM 1257 / FGSC 987).